Here is a 175-residue protein sequence, read N- to C-terminus: Large ribosomal subunit protein uL10 (175 aa).

It belongs to the universal ribosomal protein uL10 family. In terms of assembly, part of the ribosomal stalk of the 50S ribosomal subunit. The N-terminus interacts with L11 and the large rRNA to form the base of the stalk. The C-terminus forms an elongated spine to which L12 dimers bind in a sequential fashion forming a multimeric L10(L12)X complex.

In terms of biological role, forms part of the ribosomal stalk, playing a central role in the interaction of the ribosome with GTP-bound translation factors. This is Large ribosomal subunit protein uL10 from Prochlorococcus marinus (strain NATL2A).